The following is a 508-amino-acid chain: Probable cytosol aminopeptidase (508 aa).

Positions 274 and 279 each coordinate Mn(2+). The active site involves Lys-286. 3 residues coordinate Mn(2+): Asp-297, Asp-356, and Glu-358. Arg-360 is a catalytic residue.

Belongs to the peptidase M17 family. It depends on Mn(2+) as a cofactor.

Its subcellular location is the cytoplasm. It catalyses the reaction Release of an N-terminal amino acid, Xaa-|-Yaa-, in which Xaa is preferably Leu, but may be other amino acids including Pro although not Arg or Lys, and Yaa may be Pro. Amino acid amides and methyl esters are also readily hydrolyzed, but rates on arylamides are exceedingly low.. It carries out the reaction Release of an N-terminal amino acid, preferentially leucine, but not glutamic or aspartic acids.. In terms of biological role, presumably involved in the processing and regular turnover of intracellular proteins. Catalyzes the removal of unsubstituted N-terminal amino acids from various peptides. The protein is Probable cytosol aminopeptidase of Paraburkholderia xenovorans (strain LB400).